The sequence spans 518 residues: Glutamate--cysteine ligase (518 aa).

This sequence belongs to the glutamate--cysteine ligase type 1 family. Type 1 subfamily.

The catalysed reaction is L-cysteine + L-glutamate + ATP = gamma-L-glutamyl-L-cysteine + ADP + phosphate + H(+). Its pathway is sulfur metabolism; glutathione biosynthesis; glutathione from L-cysteine and L-glutamate: step 1/2. The sequence is that of Glutamate--cysteine ligase from Escherichia coli O127:H6 (strain E2348/69 / EPEC).